The chain runs to 165 residues: Anaphase-promoting complex subunit 11 (165 aa).

An RING-type; atypical zinc finger spans residues Cys-52 to Arg-95.

The APC/C is composed of at least 13 subunits that stay tightly associated throughout the cell cycle: APC1, APC2, APC4, APC5, APC9, APC11, CDC16, CDC23, CDC26, CDC27, DOC1, MND2 and SWM1.

The protein operates within protein modification; protein ubiquitination. Its function is as follows. Probably catalytic subunit of the anaphase promoting complex/cyclosome (APC/C), a cell cycle-regulated E3 ubiquitin-protein ligase complex that controls progression through mitosis and the G1 phase of the cell cycle. The APC/C is thought to confer substrate specificity and, in the presence of ubiquitin-conjugating E2 enzymes, it catalyzes the formation of protein-ubiquitin conjugates that are subsequently degraded by the 26S proteasome. In early mitosis, the APC/C is activated by CDC20 and targets securin PDS1, the B-type cyclin CLB5, and other anaphase inhibitory proteins for proteolysis, thereby triggering the separation of sister chromatids at the metaphase-to-anaphase transition. In late mitosis and in G1, degradation of CLB5 allows activation of the APC/C by CDH1, which is needed to destroy CDC20 and the B-type cyclin CLB2 to allow exit from mitosis and creating the low CDK state necessary for cytokinesis and for reforming prereplicative complexes in G1 prior to another round of replication. APC11 is required to recruit the ubiquitin-conjugating enzyme E2 to the APC/C. The chain is Anaphase-promoting complex subunit 11 (APC11) from Saccharomyces cerevisiae (strain ATCC 204508 / S288c) (Baker's yeast).